The sequence spans 204 residues: LexA repressor (204 aa).

The H-T-H motif DNA-binding region spans 27 to 47; that stretch reads VREIGEAVGLASSSTVHGHLA. Catalysis depends on for autocatalytic cleavage activity residues Ser126 and Lys164.

This sequence belongs to the peptidase S24 family. In terms of assembly, homodimer.

It catalyses the reaction Hydrolysis of Ala-|-Gly bond in repressor LexA.. Its function is as follows. Represses a number of genes involved in the response to DNA damage (SOS response), including recA and lexA. In the presence of single-stranded DNA, RecA interacts with LexA causing an autocatalytic cleavage which disrupts the DNA-binding part of LexA, leading to derepression of the SOS regulon and eventually DNA repair. The polypeptide is LexA repressor (Listeria monocytogenes serotype 4b (strain CLIP80459)).